We begin with the raw amino-acid sequence, 360 residues long: POU domain, class 5, transcription factor 1 (360 aa).

Disordered stretches follow at residues 1 to 51 (MAGH…GPGV) and 88 to 114 (GGLE…SPEP). Positions 4–12 (HLTSDFAFS) match the 9aaTAD motif. Ser-111 is subject to Phosphoserine; by MAPK. Lys-123 participates in a covalent cross-link: Glycyl lysine isopeptide (Lys-Gly) (interchain with G-Cter in SUMO). In terms of domain architecture, POU-specific spans 138 to 212 (DIKALQKELE…LLQKWVEEAD (75 aa)). 2 residues coordinate DNA: Arg-157 and Gln-164. DNA-binding stretches follow at residues 180–186 (SQTTICR) and 193–196 (SFKN). The segment at residues 230–289 (RKRKRTSIENRVRGNLENLFLQCPKPTLQQISHIAQQLGLEKDVVRVWFCNRRQKGKRSS) is a DNA-binding region (homeobox). Residue Thr-235 is modified to Phosphothreonine. Phosphoserine occurs at positions 236, 289, 290, and 355.

It belongs to the POU transcription factor family. Class-5 subfamily. As to quaternary structure, interacts with PKM. Interacts with WWP2. Interacts with UBE2I and ZSCAN10. Interacts with PCGF1. Interacts with ESRRB; recruits ESRRB near the POU5F1-SOX2 element in the NANOG proximal promoter; the interaction is DNA independent. Interacts with ZNF322. Interacts with MAPK8 and MAPK9; the interaction allows MAPK8 and MAPK9 to phosphorylate POU5F1 on Ser-355. Interacts (when phosphorylated on Ser-355) with FBXW8. Interacts with FBXW4. Interacts with SOX2 and SOX15; binds synergistically with either SOX2 or SOX15 to DNA. Interacts with DDX56. In terms of processing, sumoylation enhances the protein stability, DNA binding and transactivation activity. Sumoylation is required for enhanced YES1 expression. Ubiquitinated; undergoes 'Lys-63'-linked polyubiquitination by WWP2 leading to proteasomal degradation. Post-translationally, ERK1/2-mediated phosphorylation at Ser-111 promotes nuclear exclusion and proteasomal degradation. Phosphorylation at Thr-235 and Ser-236 decrease DNA-binding and alters ability to activate transcription.

The protein localises to the cytoplasm. It localises to the nucleus. Transcription factor that binds to the octamer motif (5'-ATTTGCAT-3'). Forms a trimeric complex with SOX2 or SOX15 on DNA and controls the expression of a number of genes involved in embryonic development such as YES1, FGF4, UTF1 and ZFP206. Critical for early embryogenesis and for embryonic stem cell pluripotency. In Pan troglodytes (Chimpanzee), this protein is POU domain, class 5, transcription factor 1 (POU5F1).